We begin with the raw amino-acid sequence, 125 residues long: MSKEEILEAIKNMTVLELAELVKALEEEFGVSAAAPVAVAAAPAAGAPAAAPAEEKTEFDVILQEVGSDKIKVIKVVREVTGLGLKEAKDLVESAPKPVKEGVSKDEANQIKAKFEEVGAKVEIK.

It belongs to the bacterial ribosomal protein bL12 family. In terms of assembly, homodimer. Part of the ribosomal stalk of the 50S ribosomal subunit. Forms a multimeric L10(L12)X complex, where L10 forms an elongated spine to which 2 to 4 L12 dimers bind in a sequential fashion. Binds GTP-bound translation factors.

Functionally, forms part of the ribosomal stalk which helps the ribosome interact with GTP-bound translation factors. Is thus essential for accurate translation. The protein is Large ribosomal subunit protein bL12 of Thermoanaerobacter sp. (strain X514).